A 120-amino-acid polypeptide reads, in one-letter code: uncharacterized protein (120 aa).

The next 3 helical transmembrane spans lie at 24-44 (ALLGYRIMAWTTGLWLIALCY), 61-81 (IGVVHGWVYFTYLLLTLNLAV), and 86-106 (PLGKTAGVLLAGTIPLLGIVV).

The protein to M.leprae ML1176.

The protein localises to the cell membrane. This is an uncharacterized protein from Mycobacterium bovis (strain ATCC BAA-935 / AF2122/97).